Reading from the N-terminus, the 234-residue chain is Isoprenyl transferase (234 aa).

Residue D13 is part of the active site. D13 is a binding site for Mg(2+). Residues 14-17, W18, R26, H30, and 58-60 each bind substrate; these read GNGR and STE. The active-site Proton acceptor is N61. Residues W62, R64, R180, and 186–188 each bind substrate; that span reads RLS. E199 is a Mg(2+) binding site.

Belongs to the UPP synthase family. As to quaternary structure, homodimer. It depends on Mg(2+) as a cofactor.

In terms of biological role, catalyzes the condensation of isopentenyl diphosphate (IPP) with allylic pyrophosphates generating different type of terpenoids. This chain is Isoprenyl transferase, found in Helicobacter pylori (strain J99 / ATCC 700824) (Campylobacter pylori J99).